Here is a 120-residue protein sequence, read N- to C-terminus: MSEAITSARATARFVRVSPMKARRVIDLVRGKSVEEALAILKYAPQAASEPVAKVVASAAANAENNFGLDRRSLVVSEAFADEGPTMRRFSPRAQGRAFQIRKRTSHITIVVESQKEGAK.

This sequence belongs to the universal ribosomal protein uL22 family. In terms of assembly, part of the 50S ribosomal subunit.

In terms of biological role, this protein binds specifically to 23S rRNA; its binding is stimulated by other ribosomal proteins, e.g. L4, L17, and L20. It is important during the early stages of 50S assembly. It makes multiple contacts with different domains of the 23S rRNA in the assembled 50S subunit and ribosome. Its function is as follows. The globular domain of the protein is located near the polypeptide exit tunnel on the outside of the subunit, while an extended beta-hairpin is found that lines the wall of the exit tunnel in the center of the 70S ribosome. The sequence is that of Large ribosomal subunit protein uL22 from Corynebacterium diphtheriae (strain ATCC 700971 / NCTC 13129 / Biotype gravis).